The primary structure comprises 56 residues: Large ribosomal subunit protein bL32 (56 aa).

Over residues 1-16 the composition is skewed to basic residues; it reads MAVQKSKKSRARRGMR. A disordered region spans residues 1 to 56; sequence MAVQKSKKSRARRGMRRSHDAISGPSLTVDQTSGETHRRHHVTADGYYKGVQVISK. The span at 25–34 shows a compositional bias: polar residues; it reads PSLTVDQTSG.

It belongs to the bacterial ribosomal protein bL32 family.

This Pseudoalteromonas translucida (strain TAC 125) protein is Large ribosomal subunit protein bL32.